The sequence spans 30 residues: NHYSYSSPPPPPVVSSPPPPYYYYSPPPPV.

4-hydroxyproline occurs at positions 8, 9, 10, 11, 12, 17, 18, 19, 20, 26, 27, 28, and 29.

In terms of processing, O-glycosylated.

Its subcellular location is the secreted. It is found in the cell wall. The chain is 136 kDa hydroxyproline-rich cell wall glycoprotein, major component from Phaseolus vulgaris (Kidney bean).